The primary structure comprises 385 residues: MDEIINKYQAVEKLFKEIQEGLAAYDQYKTLISELLHYNNHIKQEYFNFLMIISPYLIRAHSGETLRNKVNNEIKRLILVENINTKISKTLVSVNFLLQKKLSADGMKTKNMWCTNNPMLQVRTAHNLFKQLCDTQSKTQWVQTLKYKECKYCHTDMVFNTTQFGLQCPNCGCIQELMGTIFDETHFYNHDGQKAKSGIFNPNRHYRFWIEHILGRNSEQELGTKQDPCGTKVLQQLKKIIKRDNKCIALLTVENIRKMLKEINRTDLNNCVSLILRKLTGVGPPQISESILLRGEYIFTEAIKIREKVCKKGRINRNYYPYYIYKIFDAILPPNDTTNRRILQYIHLQGNDTLANNDSEWESICMELPEIKWKPTDRTHCVHFF.

The segment at 166–190 adopts a C2H2-type zinc-finger fold; sequence LQCPNCGCIQELMGTIFDETHFYNH.

This sequence belongs to the asfivirus B385R family.

The polypeptide is Zinc finger protein B385R (Ornithodoros (relapsing fever ticks)).